The following is a 319-amino-acid chain: Large ribosomal subunit protein uL10 (319 aa).

Residues 289-319 form a disordered region; it reads EQKSAAPAAKEEAPKEDSEESDEDMGFGLFD.

Belongs to the universal ribosomal protein uL10 family. As to quaternary structure, P0 forms a pentameric complex by interaction with dimers of P1 and P2. In terms of processing, phosphorylated.

It is found in the nucleus. The protein localises to the cytoplasm. Its function is as follows. Ribosomal protein P0 is the functional equivalent of E.coli protein L10. This is Large ribosomal subunit protein uL10 (rplp0) from Danio rerio (Zebrafish).